Here is a 434-residue protein sequence, read N- to C-terminus: Tol-Pal system protein TolB (434 aa).

Residues 1 to 28 (MMNTRVWCKIIGMLALLVWLVSSPSVFA) form the signal peptide.

It belongs to the TolB family. As to quaternary structure, the Tol-Pal system is composed of five core proteins: the inner membrane proteins TolA, TolQ and TolR, the periplasmic protein TolB and the outer membrane protein Pal. They form a network linking the inner and outer membranes and the peptidoglycan layer.

Its subcellular location is the periplasm. In terms of biological role, part of the Tol-Pal system, which plays a role in outer membrane invagination during cell division and is important for maintaining outer membrane integrity. The sequence is that of Tol-Pal system protein TolB from Nitrosococcus oceani (strain ATCC 19707 / BCRC 17464 / JCM 30415 / NCIMB 11848 / C-107).